We begin with the raw amino-acid sequence, 137 residues long: Ribosome-binding factor A (137 aa).

Belongs to the RbfA family. Monomer. Binds 30S ribosomal subunits, but not 50S ribosomal subunits or 70S ribosomes.

It localises to the cytoplasm. Functionally, one of several proteins that assist in the late maturation steps of the functional core of the 30S ribosomal subunit. Associates with free 30S ribosomal subunits (but not with 30S subunits that are part of 70S ribosomes or polysomes). Required for efficient processing of 16S rRNA. May interact with the 5'-terminal helix region of 16S rRNA. This chain is Ribosome-binding factor A, found in Synechococcus sp. (strain ATCC 27144 / PCC 6301 / SAUG 1402/1) (Anacystis nidulans).